Consider the following 319-residue polypeptide: Acetyl-coenzyme A carboxylase carboxyl transferase subunit alpha (319 aa).

The CoA carboxyltransferase C-terminal domain occupies 35–296 (DLDKEIEQLE…KATLLRQLED (262 aa)).

It belongs to the AccA family. As to quaternary structure, acetyl-CoA carboxylase is a heterohexamer composed of biotin carboxyl carrier protein (AccB), biotin carboxylase (AccC) and two subunits each of ACCase subunit alpha (AccA) and ACCase subunit beta (AccD).

It localises to the cytoplasm. It catalyses the reaction N(6)-carboxybiotinyl-L-lysyl-[protein] + acetyl-CoA = N(6)-biotinyl-L-lysyl-[protein] + malonyl-CoA. It functions in the pathway lipid metabolism; malonyl-CoA biosynthesis; malonyl-CoA from acetyl-CoA: step 1/1. Functionally, component of the acetyl coenzyme A carboxylase (ACC) complex. First, biotin carboxylase catalyzes the carboxylation of biotin on its carrier protein (BCCP) and then the CO(2) group is transferred by the carboxyltransferase to acetyl-CoA to form malonyl-CoA. In Vibrio parahaemolyticus serotype O3:K6 (strain RIMD 2210633), this protein is Acetyl-coenzyme A carboxylase carboxyl transferase subunit alpha.